Reading from the N-terminus, the 223-residue chain is Octanoyltransferase (223 aa).

Positions 30 to 214 (DLDRDCFLLT…IVADLFGEFT (185 aa)) constitute a BPL/LPL catalytic domain. Substrate is bound by residues 75–82 (RGGEITYH), 144–146 (SIG), and 157–159 (GFA). The active-site Acyl-thioester intermediate is C175.

The protein belongs to the LipB family.

It is found in the cytoplasm. The enzyme catalyses octanoyl-[ACP] + L-lysyl-[protein] = N(6)-octanoyl-L-lysyl-[protein] + holo-[ACP] + H(+). It functions in the pathway protein modification; protein lipoylation via endogenous pathway; protein N(6)-(lipoyl)lysine from octanoyl-[acyl-carrier-protein]: step 1/2. Catalyzes the transfer of endogenously produced octanoic acid from octanoyl-acyl-carrier-protein onto the lipoyl domains of lipoate-dependent enzymes. Lipoyl-ACP can also act as a substrate although octanoyl-ACP is likely to be the physiological substrate. This Desulfotalea psychrophila (strain LSv54 / DSM 12343) protein is Octanoyltransferase.